The sequence spans 274 residues: Diaminopimelate epimerase (274 aa).

Residues Asn11, Gln44, and Asn64 each coordinate substrate. The active-site Proton donor is the Cys73. Substrate-binding positions include 74 to 75 (GN), Asn157, Asn190, and 208 to 209 (ER). Residue Cys217 is the Proton acceptor of the active site. 218 to 219 (GS) is a substrate binding site.

This sequence belongs to the diaminopimelate epimerase family. As to quaternary structure, homodimer.

The protein localises to the cytoplasm. It catalyses the reaction (2S,6S)-2,6-diaminopimelate = meso-2,6-diaminopimelate. Its pathway is amino-acid biosynthesis; L-lysine biosynthesis via DAP pathway; DL-2,6-diaminopimelate from LL-2,6-diaminopimelate: step 1/1. Catalyzes the stereoinversion of LL-2,6-diaminopimelate (L,L-DAP) to meso-diaminopimelate (meso-DAP), a precursor of L-lysine and an essential component of the bacterial peptidoglycan. The sequence is that of Diaminopimelate epimerase from Edwardsiella ictaluri (strain 93-146).